Here is a 307-residue protein sequence, read N- to C-terminus: Ribosomal RNA small subunit methyltransferase H (307 aa).

Residues 32-34 (GGH), D52, F78, D99, and Q106 each bind S-adenosyl-L-methionine. The tract at residues 287–307 (KEEIESNKRSHSAKLRVAEKV) is disordered.

This sequence belongs to the methyltransferase superfamily. RsmH family.

Its subcellular location is the cytoplasm. The enzyme catalyses cytidine(1402) in 16S rRNA + S-adenosyl-L-methionine = N(4)-methylcytidine(1402) in 16S rRNA + S-adenosyl-L-homocysteine + H(+). Specifically methylates the N4 position of cytidine in position 1402 (C1402) of 16S rRNA. This Caldicellulosiruptor bescii (strain ATCC BAA-1888 / DSM 6725 / KCTC 15123 / Z-1320) (Anaerocellum thermophilum) protein is Ribosomal RNA small subunit methyltransferase H.